A 218-amino-acid polypeptide reads, in one-letter code: Keratin-associated protein 10-8 (218 aa).

The segment at C26 to A202 is 16 X 5 AA repeats of C-C-X(3). Repeat copies occupy residues C50–T54, C55–S59, C60–A64, C86–S90, C96–V100, C101–V105, C111–V115, C121–V125, C131–V135, C136–V140, C141–V145, C151–M155, P161–S167, C168–S172, C187–T191, and C198–A202.

The protein belongs to the KRTAP type 10 family. As to quaternary structure, interacts with hair keratins.

In the hair cortex, hair keratin intermediate filaments are embedded in an interfilamentous matrix, consisting of hair keratin-associated proteins (KRTAP), which are essential for the formation of a rigid and resistant hair shaft through their extensive disulfide bond cross-linking with abundant cysteine residues of hair keratins. The matrix proteins include the high-sulfur and high-glycine-tyrosine keratins. This is Keratin-associated protein 10-8 from Bos taurus (Bovine).